Here is a 464-residue protein sequence, read N- to C-terminus: GTPase Der (464 aa).

EngA-type G domains follow at residues 3–166 (PVIA…PEVE) and 178–351 (IRIA…DSAF). GTP-binding positions include 9–16 (GRPNVGKS), 56–60 (DTGGL), 118–121 (NKTD), 184–191 (GRPNAGKS), 231–235 (DTAGV), and 296–299 (NKWD). In terms of domain architecture, KH-like spans 352–436 (IKVSTNHLTK…PIRLEFKTGE (85 aa)).

It belongs to the TRAFAC class TrmE-Era-EngA-EngB-Septin-like GTPase superfamily. EngA (Der) GTPase family. As to quaternary structure, associates with the 50S ribosomal subunit.

Its function is as follows. GTPase that plays an essential role in the late steps of ribosome biogenesis. The chain is GTPase Der from Thioalkalivibrio sulfidiphilus (strain HL-EbGR7).